Reading from the N-terminus, the 101-residue chain is Ascorbate-specific PTS system EIIB component (101 aa).

A PTS EIIB type-2 domain is found at 3–96 (VRILAVCGNG…KLLEVIKAHF (94 aa)). The active-site Phosphocysteine intermediate is the Cys9. Cys9 carries the phosphocysteine modification.

Its subcellular location is the cytoplasm. It catalyses the reaction N(pros)-phospho-L-histidyl-[protein] + L-ascorbate(out) = L-ascorbate 6-phosphate(in) + L-histidyl-[protein]. Functionally, the phosphoenolpyruvate-dependent sugar phosphotransferase system (sugar PTS), a major carbohydrate active transport system, catalyzes the phosphorylation of incoming sugar substrates concomitantly with their translocation across the cell membrane. The enzyme II UlaABC PTS system is involved in ascorbate transport. The sequence is that of Ascorbate-specific PTS system EIIB component (ulaB) from Shigella sonnei (strain Ss046).